Consider the following 312-residue polypeptide: Magnesium protoporphyrin IX methyltransferase, chloroplastic (312 aa).

The N-terminal 39 residues, 1-39 (MPFAPSLLSSSSSVSQFLPRFPNATRFNVTPRSRAATVV), are a transit peptide targeting the chloroplast.

This sequence belongs to the class I-like SAM-binding methyltransferase superfamily. Magnesium protoporphyrin O-methyltransferase family.

The protein localises to the plastid. Its subcellular location is the chloroplast membrane. It localises to the chloroplast thylakoid membrane. It carries out the reaction Mg-protoporphyrin IX + S-adenosyl-L-methionine = Mg-protoporphyrin IX 13-monomethyl ester + S-adenosyl-L-homocysteine. It participates in porphyrin-containing compound metabolism; chlorophyll biosynthesis. With respect to regulation, regulated by the folate status via an increased concentration of S-adenosyl-homocysteine (AdoHcy), a potent inhibitor of most AdoMet-dependent methyltransferases. Functionally, converts Mg-protoporphyrin IX to Mg-protoporphyrin IX methylester using S-adenosyl-L-methionine as a cofactor. Involved in chloroplast-to-nucleus signaling by acting as a negative effector of nuclear photosynthetic gene expression. This chain is Magnesium protoporphyrin IX methyltransferase, chloroplastic (CHLM), found in Arabidopsis thaliana (Mouse-ear cress).